The sequence spans 177 residues: Cytochrome c-type biogenesis protein CcmE (177 aa).

The Cytoplasmic segment spans residues 1–7; the sequence is MTRKSRR. Residues 8 to 28 traverse the membrane as a helical; Signal-anchor for type II membrane protein segment; sequence LILIAACGAVLALALGLILSA. The Periplasmic portion of the chain corresponds to 29–177; that stretch reads MSGSIVFFRS…DATLGQRSER (149 aa). Heme is bound by residues His122 and Tyr126. The tract at residues 133–177 is disordered; it reads DALKAQGRWQEGGSKEAPKDASKAAPKDAAKPETADATLGQRSER. Basic and acidic residues predominate over residues 145–166; the sequence is GSKEAPKDASKAAPKDAAKPET.

Belongs to the CcmE/CycJ family.

It is found in the cell inner membrane. Functionally, heme chaperone required for the biogenesis of c-type cytochromes. Transiently binds heme delivered by CcmC and transfers the heme to apo-cytochromes in a process facilitated by CcmF and CcmH. This is Cytochrome c-type biogenesis protein CcmE from Methylorubrum extorquens (strain PA1) (Methylobacterium extorquens).